The chain runs to 324 residues: UDP-N-acetylenolpyruvoylglucosamine reductase (324 aa).

Residues 38-231 (AGGSARRLYV…SRERIRSLLK (194 aa)) enclose the FAD-binding PCMH-type domain. Arginine 195 is a catalytic residue. Serine 246 functions as the Proton donor in the catalytic mechanism. Residue glutamate 316 is part of the active site.

Belongs to the MurB family. FAD is required as a cofactor.

It is found in the cytoplasm. It catalyses the reaction UDP-N-acetyl-alpha-D-muramate + NADP(+) = UDP-N-acetyl-3-O-(1-carboxyvinyl)-alpha-D-glucosamine + NADPH + H(+). Its pathway is cell wall biogenesis; peptidoglycan biosynthesis. In terms of biological role, cell wall formation. This chain is UDP-N-acetylenolpyruvoylglucosamine reductase, found in Thiobacillus denitrificans (strain ATCC 25259 / T1).